The sequence spans 20 residues: Cuticle-degrading protease-like protein (20 aa).

Positions 1-20 (AIVEQQGAPXGLGRIINKXK) are disordered.

This sequence belongs to the peptidase S8 family.

The protein resides in the secreted. Capable of breaching the insect cuticle. This Metacordyceps chlamydosporia (Nematophagous fungus) protein is Cuticle-degrading protease-like protein.